Here is a 355-residue protein sequence, read N- to C-terminus: D-alanine--D-alanine ligase (355 aa).

The 208-residue stretch at 143 to 350 (KTIFSNHKLP…IEQLVAKLVD (208 aa)) folds into the ATP-grasp domain. 178–233 (LKKLKFPVFVKPSNSGSSLGISKVKNESEILLALEKAWGIDPRILIEEGLEVREIE) contacts ATP. Residues Asp303, Glu317, and Asn319 each contribute to the Mg(2+) site.

This sequence belongs to the D-alanine--D-alanine ligase family. The cofactor is Mg(2+). Mn(2+) is required as a cofactor.

The protein resides in the cytoplasm. The catalysed reaction is 2 D-alanine + ATP = D-alanyl-D-alanine + ADP + phosphate + H(+). Its pathway is cell wall biogenesis; peptidoglycan biosynthesis. Its function is as follows. Cell wall formation. The sequence is that of D-alanine--D-alanine ligase from Prochlorococcus marinus (strain MIT 9301).